The sequence spans 62 residues: uncharacterized protein (62 aa).

The protein resides in the plastid. The protein localises to the chloroplast. This is an uncharacterized protein from Guillardia theta (Cryptophyte).